The primary structure comprises 494 residues: Cytochrome P450 2A10 (494 aa).

At K379 the chain carries N6-acetyllysine. C439 is a binding site for heme.

It belongs to the cytochrome P450 family. Heme is required as a cofactor. In terms of tissue distribution, expressed in liver and lung as well as in nasal tissues.

It localises to the endoplasmic reticulum membrane. The protein resides in the microsome membrane. The catalysed reaction is an organic molecule + reduced [NADPH--hemoprotein reductase] + O2 = an alcohol + oxidized [NADPH--hemoprotein reductase] + H2O + H(+). In terms of biological role, catalyzes the oxygenation of a variety of substrates, including ethanol and procarcinogens such as N-nitrosodiethylamine and phenacetin. Exhibits a high coumarin 7-hydroxylase activity. Converts also testosterone to androstenedione. This Oryctolagus cuniculus (Rabbit) protein is Cytochrome P450 2A10 (CYP2A10).